The chain runs to 349 residues: Dihydroorotate dehydrogenase (quinone) (349 aa).

Residues 65-69 and alanine 89 contribute to the FMN site; that span reads AGFDK. Residue lysine 69 coordinates substrate. Substrate is bound at residue 114 to 118; the sequence is NRMGF. FMN is bound by residues asparagine 143 and asparagine 176. Position 176 (asparagine 176) interacts with substrate. Residue serine 179 is the Nucleophile of the active site. Asparagine 181 is a substrate binding site. Residues lysine 212 and threonine 240 each contribute to the FMN site. Residue 241-242 participates in substrate binding; the sequence is NT. The interval 244–265 is disordered; the sequence is TERPESLSHPHAGEQGGLSGAP. Residues 245–255 are compositionally biased toward basic and acidic residues; sequence ERPESLSHPHA. Residues glycine 263, glycine 290, and 311 to 312 contribute to the FMN site; that span reads YT.

It belongs to the dihydroorotate dehydrogenase family. Type 2 subfamily. Monomer. It depends on FMN as a cofactor.

The protein localises to the cell membrane. The enzyme catalyses (S)-dihydroorotate + a quinone = orotate + a quinol. It participates in pyrimidine metabolism; UMP biosynthesis via de novo pathway; orotate from (S)-dihydroorotate (quinone route): step 1/1. Its function is as follows. Catalyzes the conversion of dihydroorotate to orotate with quinone as electron acceptor. In Halobacterium salinarum (strain ATCC 29341 / DSM 671 / R1), this protein is Dihydroorotate dehydrogenase (quinone).